The sequence spans 711 residues: Putative DNA topoisomerase 3 (711 aa).

Residues 2–135 (KYLILAEKPS…LRRLWISSVT (134 aa)) form the Toprim domain. Residues Glu8 and Asp104 each coordinate Mg(2+). Positions 152 to 580 (YNDLYYAALA…EMKGFTKDVV (429 aa)) constitute a Topo IA-type catalytic domain. The interval 186–191 (SLGRVQ) is interaction with DNA. Residue Tyr305 is the O-(5'-phospho-DNA)-tyrosine intermediate of the active site. The tract at residues 691–711 (MNKNEGLDNNPFKDALKNLNL) is disordered.

The protein belongs to the type IA topoisomerase family. The cofactor is Mg(2+).

The catalysed reaction is ATP-independent breakage of single-stranded DNA, followed by passage and rejoining.. In terms of biological role, releases the supercoiling and torsional tension of DNA, which is introduced during the DNA replication and transcription, by transiently cleaving and rejoining one strand of the DNA duplex. Introduces a single-strand break via transesterification at a target site in duplex DNA. The scissile phosphodiester is attacked by the catalytic tyrosine of the enzyme, resulting in the formation of a DNA-(5'-phosphotyrosyl)-enzyme intermediate and the expulsion of a 3'-OH DNA strand. The free DNA strand then undergoes passage around the unbroken strand, thus removing DNA supercoils. Finally, in the religation step, the DNA 3'-OH attacks the covalent intermediate to expel the active-site tyrosine and restore the DNA phosphodiester backbone. In Staphylococcus aureus (strain bovine RF122 / ET3-1), this protein is Putative DNA topoisomerase 3.